Reading from the N-terminus, the 182-residue chain is UPF0397 protein BA_2640/GBAA_2640/BAS2460 (182 aa).

5 consecutive transmembrane segments (helical) span residues Val-9–Ile-29, Ala-40–Ile-60, Trp-71–Ile-91, Ile-114–Val-134, and Ile-142–Leu-162.

It belongs to the UPF0397 family.

The protein resides in the cell membrane. This Bacillus anthracis protein is UPF0397 protein BA_2640/GBAA_2640/BAS2460.